We begin with the raw amino-acid sequence, 83 residues long: NAD(P)H-quinone oxidoreductase subunit L (83 aa).

A run of 2 helical transmembrane segments spans residues leucine 15–leucine 35 and leucine 53–leucine 73.

This sequence belongs to the complex I NdhL subunit family. As to quaternary structure, NDH-1 can be composed of about 15 different subunits; different subcomplexes with different compositions have been identified which probably have different functions.

Its subcellular location is the cellular thylakoid membrane. It catalyses the reaction a plastoquinone + NADH + (n+1) H(+)(in) = a plastoquinol + NAD(+) + n H(+)(out). The enzyme catalyses a plastoquinone + NADPH + (n+1) H(+)(in) = a plastoquinol + NADP(+) + n H(+)(out). Its function is as follows. NDH-1 shuttles electrons from an unknown electron donor, via FMN and iron-sulfur (Fe-S) centers, to quinones in the respiratory and/or the photosynthetic chain. The immediate electron acceptor for the enzyme in this species is believed to be plastoquinone. Couples the redox reaction to proton translocation, and thus conserves the redox energy in a proton gradient. Cyanobacterial NDH-1 also plays a role in inorganic carbon-concentration. In Prochlorococcus marinus (strain MIT 9303), this protein is NAD(P)H-quinone oxidoreductase subunit L.